Here is a 300-residue protein sequence, read N- to C-terminus: Peptidyl-prolyl cis-trans isomerase E (300 aa).

The RRM domain maps to 6–84 (RTIYVGGLAD…RTIRVNLAKP (79 aa)). Positions 142–298 (FFDIRIGGND…QKIVIYSCGE (157 aa)) constitute a PPIase cyclophilin-type domain.

It belongs to the cyclophilin-type PPIase family. PPIase E subfamily.

The protein resides in the nucleus. It carries out the reaction [protein]-peptidylproline (omega=180) = [protein]-peptidylproline (omega=0). In terms of biological role, PPIases accelerate the folding of proteins. It catalyzes the cis-trans isomerization of proline imidic peptide bonds in oligopeptides. Combines RNA-binding and PPIase activities. The sequence is that of Peptidyl-prolyl cis-trans isomerase E (cyp33) from Drosophila melanogaster (Fruit fly).